Here is a 767-residue protein sequence, read N- to C-terminus: MHPTLISAPISSSANDAHAGTSQGSHQGHRIQVIRRDGSSTPLNIGKIRAVVDWACLGLEVNSIALEAGLTTRLREGISTREIQDNLISCALEMCSPNEPDWRYVAGRLHVWSLWKDTLVRRGYQYGQYLRTVQTKVTNGEYDSRILTYSEGELQEAGCWINSDWDTDYDYAGAVLLTSRYLLPNELPQEALLTCALLLASVEAPDRRLQWARRFYESIAARRISLATPILANLRVPGGSLTSCFIVAMEDNLESIFGEITNAARISKNGGGVGVNVSRIRATGSWVMGKPNASGGVIPWTKLLNDTAIAVNQGGRRAGAVTVGLDVWHLDVPEFLEMQAENGDQRRKAYDIFPQLILPDEFMRRVINKEDWTLVDPYEVREKMGIELAELWGEQFEGAYREIESNLDTTITLYKRINARELFKQIMRTQVETGMPYLSFKDTINKANPNKHLGYIPGTNLCCESFSNVTPGQDAHCCNLVSLNLANLDLQDIAGVSQIAVRMLDNTIELTAPPFADAKSHNNKYRTIGVGAMGLADWLAKRRLNYDELADINRLFEEIGYWCTQSSMELAKERGAYPAFPGSDWQKGLLIGSKPVSWFQANAAKPERWEKLSNDIQTHGIRNSHITAIAPNTSSSLVQGCTASILPVYSRFFYDKWAKGTVPIAPPFIGNCFWFYPENKTMDQRKVVKAVAAIQQWTDTGISMELLFNLNAGIYFPEEPERSLNAKDIFDTLVMAWEAGCKAIYYIRTVQKDDFKDSSDGCVACAN.

Residues 1-30 (MHPTLISAPISSSANDAHAGTSQGSHQGHR) form a disordered region. Residues 9 to 26 (PISSSANDAHAGTSQGSH) are compositionally biased toward polar residues. Positions 31–120 (IQVIRRDGSS…VWSLWKDTLV (90 aa)) constitute an ATP-cone domain. Substrate contacts are provided by residues T228, 243–244 (SC), G272, 460–464 (NLCCE), and 631–635 (PNTSS). An intrachain disulfide couples C244 to C478. The active-site Proton acceptor is the N460. C462 serves as the catalytic Cysteine radical intermediate. Residue E464 is the Proton acceptor of the active site.

Belongs to the ribonucleoside diphosphate reductase large chain family. As to quaternary structure, tetramer of two alpha and two beta subunits.

It carries out the reaction a 2'-deoxyribonucleoside 5'-diphosphate + [thioredoxin]-disulfide + H2O = a ribonucleoside 5'-diphosphate + [thioredoxin]-dithiol. Its activity is regulated as follows. Under complex allosteric control mediated by deoxynucleoside triphosphates and ATP binding. The type of nucleotide bound at the specificity site determines substrate preference. It seems probable that ATP makes the enzyme reduce CDP and UDP, dGTP favors ADP reduction and dTTP favors GDP reduction. In terms of biological role, provides the precursors necessary for DNA synthesis. Catalyzes the biosynthesis of deoxyribonucleotides from the corresponding ribonucleotides. In Synechocystis sp. (strain ATCC 27184 / PCC 6803 / Kazusa), this protein is Ribonucleoside-diphosphate reductase subunit alpha (nrdA).